The sequence spans 190 residues: MASQTIPKLKSVLYCDVCTLPVEYCEFEGTLKKCKEWLKSSHPDVYDKLYGEQDLSKDLENTLNVSGTKDSNAEEQPAKLTKEEKRVEREEAKRMASKVLIKTIERTKRKRVTTVQGLDAFGIETKKAAKMLANKFATGASVTKTADKKDEIVVQGDLNYDIFDFILEKFKEVPEDNIKIVEDTKSKKKQ.

Residues 63 to 83 form a disordered region; it reads LNVSGTKDSNAEEQPAKLTKE. One can recognise an SUI1 domain in the interval 99-170; sequence VLIKTIERTK…DIFDFILEKF (72 aa).

It belongs to the DENR family. Interacts with the 40S ribosomal subunit.

It is found in the cytoplasm. This is Translation machinery-associated protein 22 (tma22) from Schizosaccharomyces pombe (strain 972 / ATCC 24843) (Fission yeast).